The following is a 937-amino-acid chain: uncharacterized protein (937 aa).

Residue Thr2 is modified to N-acetylthreonine. Positions 281-937 (NESPSSNINT…KKGKGKGGRK (657 aa)) are disordered. Positions 290-308 (TTTTSTTTTTTTTTSSPVV) are enriched in low complexity. Thr292 functions as the Charge relay system in the catalytic mechanism. Basic and acidic residues-rich tracts occupy residues 309 to 402 (EESK…EKQQ), 411 to 431 (AEKERLEKEEADKLEKERLEA), 469 to 489 (AEKERLEKEEADRLEKEKLEA), 512 to 532 (AEKERLEKEETERLEKEKLEA), 600 to 615 (AEKEEAERLEKEKLEA), 667 to 687 (AEKERLEKEEAERLEKEKLEA), 738 to 758 (AEKERLEKEETERLEKERLEA), and 780 to 872 (AEKE…KVEE). Positions 345 to 802 (VDDSKEKEEK…KAAEETKVEE (458 aa)) form a coiled coil. Acidic residues predominate over residues 887–897 (EETEEGEEVDE). Low complexity predominate over residues 898-924 (ASNTTTEQTTTNANQPKKPNNNNNNNK). A compositionally biased stretch (basic residues) spans 925–937 (GKGKKGKGKGGRK).

This sequence belongs to the AB hydrolase superfamily.

This is an uncharacterized protein from Dictyostelium discoideum (Social amoeba).